The sequence spans 765 residues: Probable exo-1,4-beta-xylosidase bxlB (765 aa).

The first 25 residues, 1–25 (MYSSNSRRAASILACIVSLTQLGFA), serve as a signal peptide directing secretion. N-linked (GlcNAc...) asparagine glycosylation is found at Asn-67 and Asn-107. Asp-293 is a catalytic residue. N-linked (GlcNAc...) asparagine glycosylation is found at Asn-345, Asn-412, Asn-423, Asn-464, and Asn-761.

It belongs to the glycosyl hydrolase 3 family.

It localises to the secreted. The catalysed reaction is Hydrolysis of (1-&gt;4)-beta-D-xylans, to remove successive D-xylose residues from the non-reducing termini.. It participates in glycan degradation; xylan degradation. Functionally, xylan 1,4-beta-xylosidase involved in the hydrolysis of xylan, a major structural heterogeneous polysaccharide found in plant biomass representing the second most abundant polysaccharide in the biosphere, after cellulose. This Aspergillus terreus (strain NIH 2624 / FGSC A1156) protein is Probable exo-1,4-beta-xylosidase bxlB (bxlB).